We begin with the raw amino-acid sequence, 392 residues long: MSIRTIKDCDFSGKRALVRCDFNVPLREGNITDDTRIKAALPTIEYLKSQGARVVLMSHLGRPKGEKNLRYSLMPIARRLSELLGQNVKMLSDCIGDEVVTAVSCMQNGDVVLLENVRFYKEEEENSDAFAMQLSKSGDIFVNDAFGTAHRAHASTSGVASYLPAVGGFLMEREDEFLGKILKNPESPFVSIIGGSKVSSKIAVLESLLPKSNVMVIGGGMAYTFLKVEGYSIGKSLLENEYIDVASSFLKKAKELSVEVILPIDHVVASEFQEYSMPEYVDSVNIPDSKIGMDIGEKTLKKIEGVLSSAKTVIWNGPLGVFEFDSFAKGTAKVAEYVANCPGITVVGGGDSVAAVNKFNLSGKITHVSTGGGASLEYLEGKVLPGIKVLEV.

Substrate contacts are provided by residues 21–23 (DFN), R36, 59–62 (HLGR), R118, and R151. ATP is bound by residues K201, G292, E323, and 349-352 (GGDS).

It belongs to the phosphoglycerate kinase family. In terms of assembly, monomer.

It localises to the cytoplasm. The enzyme catalyses (2R)-3-phosphoglycerate + ATP = (2R)-3-phospho-glyceroyl phosphate + ADP. Its pathway is carbohydrate degradation; glycolysis; pyruvate from D-glyceraldehyde 3-phosphate: step 2/5. The polypeptide is Phosphoglycerate kinase (Borrelia duttonii (strain Ly)).